Consider the following 601-residue polypeptide: MAEKNSHIRNFSIIAHIDHGKSTLADRLLEHTGTVTKREAQAQFLDNMELERERGITIKAQTVRMKYRAQDGRDYELNLIDTPGHVDFAYEVSRSMAACEGAILVVDATQGVEAQTLANVYQALDHDLEIVPVINKIDLPSADVEGVRQEIEEVIGLDAKDAVPASAKEGIGIGEILEQIVHRVPPPEGDPEAPLKAIVFDSWYDSYRGVVMLVRVFEGTVRPKQKIRLWSNRKEFEVQELGIFAPFAKAVGELQAGEVGVVVANVKDVHDAKVGDTITDAARPTEAPFPGFKVVKPMVFSGVFPIEAADYEQLRDALEKLSLNDSAFTYEPETSQALGFGFRCGYLGLLHMEIVQERLEREYQLALITTAPSVVYRVTDTTGAVEEIDNPAKLPPVQKIAKLEEPHLTCHIHARTEDVGAILKLCQERRGLQRDLKYLGTKRVQITYDIPLAEVVFDFFDKLKSVSRGYASLDYELKGYEEADLVKLDILINGEPVDALSVIVHRERAYQRGRDLCQRLREVIPKQMYEVAIQAAIGAKVIARETVKAFRKNVLAKCYGGDISRKRKLLEKQKEGKKRMKQVGSVEIPQEAFLAVLKVEE.

In terms of domain architecture, tr-type G spans S6–E188. Residues D18–T23 and N135–D138 contribute to the GTP site.

The protein belongs to the TRAFAC class translation factor GTPase superfamily. Classic translation factor GTPase family. LepA subfamily.

It localises to the cell inner membrane. It catalyses the reaction GTP + H2O = GDP + phosphate + H(+). Its function is as follows. Required for accurate and efficient protein synthesis under certain stress conditions. May act as a fidelity factor of the translation reaction, by catalyzing a one-codon backward translocation of tRNAs on improperly translocated ribosomes. Back-translocation proceeds from a post-translocation (POST) complex to a pre-translocation (PRE) complex, thus giving elongation factor G a second chance to translocate the tRNAs correctly. Binds to ribosomes in a GTP-dependent manner. The sequence is that of Elongation factor 4 from Anaeromyxobacter dehalogenans (strain 2CP-C).